A 327-amino-acid polypeptide reads, in one-letter code: Aspartate--ammonia ligase (327 aa).

The protein belongs to the class-II aminoacyl-tRNA synthetase family. AsnA subfamily.

It is found in the cytoplasm. The catalysed reaction is L-aspartate + NH4(+) + ATP = L-asparagine + AMP + diphosphate + H(+). Its pathway is amino-acid biosynthesis; L-asparagine biosynthesis; L-asparagine from L-aspartate (ammonia route): step 1/1. This is Aspartate--ammonia ligase from Bacillus mycoides (strain KBAB4) (Bacillus weihenstephanensis).